The sequence spans 998 residues: Regulator of telomere elongation helicase 1 homolog (998 aa).

In terms of domain architecture, Helicase ATP-binding spans 7-324 (AGIPVHFPFE…KEMLLELEKA (318 aa)). 42–49 (SPTGTGKT) lines the ATP pocket. 4 residues coordinate [4Fe-4S] cluster: Cys-148, Cys-166, Cys-175, and Cys-211. A DEAH box motif is present at residues 254 to 257 (DEAH). The segment at 426–454 (QNAGKPAPKQQQQGGWLGKGNNTSNSSSS) is disordered. The residue at position 887 (Thr-887) is a Phosphothreonine.

This sequence belongs to the helicase family. RAD3/XPD subfamily.

It is found in the nucleus. It catalyses the reaction ATP + H2O = ADP + phosphate + H(+). Functionally, a probable ATP-dependent DNA helicase implicated in DNA repair and the maintenance of genomic stability. Acts as an anti-recombinase to counteract toxic recombination and limit crossover during meiosis. Regulates meiotic recombination and crossover homeostasis by physically dissociating strand invasion events and thereby promotes noncrossover repair by meiotic synthesis dependent strand annealing (SDSA) as well as disassembly of D loop recombination intermediates. The chain is Regulator of telomere elongation helicase 1 homolog from Drosophila willistoni (Fruit fly).